A 288-amino-acid chain; its full sequence is Energy-coupling factor transporter ATP-binding protein EcfA2 (288 aa).

The 241-residue stretch at 3-243 (IVFEAVSHIY…RAELEAIGLG (241 aa)) folds into the ABC transporter domain. 40-47 (GPTGSGKS) lines the ATP pocket.

The protein belongs to the ABC transporter superfamily. Energy-coupling factor EcfA family. As to quaternary structure, forms a stable energy-coupling factor (ECF) transporter complex composed of 2 membrane-embedded substrate-binding proteins (S component), 2 ATP-binding proteins (A component) and 2 transmembrane proteins (T component).

It is found in the cell membrane. In terms of biological role, ATP-binding (A) component of a common energy-coupling factor (ECF) ABC-transporter complex. Unlike classic ABC transporters this ECF transporter provides the energy necessary to transport a number of different substrates. This Symbiobacterium thermophilum (strain DSM 24528 / JCM 14929 / IAM 14863 / T) protein is Energy-coupling factor transporter ATP-binding protein EcfA2.